A 210-amino-acid polypeptide reads, in one-letter code: Phosphoheptose isomerase (210 aa).

Residues 38–202 (IAACLARGGK…ENVAALAPYL (165 aa)) form the SIS domain. 53 to 55 (NGG) contributes to the substrate binding site. 2 residues coordinate Zn(2+): His62 and Glu66. Substrate contacts are provided by residues Glu66, 95-96 (ND), 121-123 (STS), Ser126, and Gln173. Positions 173 and 181 each coordinate Zn(2+).

It belongs to the SIS family. GmhA subfamily. Homotetramer. Zn(2+) serves as cofactor.

The protein localises to the cytoplasm. It catalyses the reaction 2 D-sedoheptulose 7-phosphate = D-glycero-alpha-D-manno-heptose 7-phosphate + D-glycero-beta-D-manno-heptose 7-phosphate. The protein operates within carbohydrate biosynthesis; D-glycero-D-manno-heptose 7-phosphate biosynthesis; D-glycero-alpha-D-manno-heptose 7-phosphate and D-glycero-beta-D-manno-heptose 7-phosphate from sedoheptulose 7-phosphate: step 1/1. Its function is as follows. Catalyzes the isomerization of sedoheptulose 7-phosphate in D-glycero-D-manno-heptose 7-phosphate. The polypeptide is Phosphoheptose isomerase (Desulfovibrio desulfuricans (strain ATCC 27774 / DSM 6949 / MB)).